Consider the following 219-residue polypeptide: Auxin-responsive protein IAA24 (219 aa).

An EAR-like (transcriptional repression) motif is present at residues 24 to 28 (LCLRL). Disordered stretches follow at residues 24-88 (LCLR…AKAQ) and 109-128 (AAAATKKGGDEKQKQQQQGG). The segment covering 60 to 71 (STDSMASGTGTS) has biased composition (polar residues). The PB1 domain occupies 129–215 (GLYVKVSMDG…SCKKLRIMKG (87 aa)).

The protein belongs to the Aux/IAA family. Homodimers and heterodimers. Highly expressed in flowers. Expressed in seedlings.

It is found in the nucleus. Aux/IAA proteins are short-lived transcriptional factors that function as repressors of early auxin response genes at low auxin concentrations. The sequence is that of Auxin-responsive protein IAA24 (IAA24) from Oryza sativa subsp. japonica (Rice).